Reading from the N-terminus, the 608-residue chain is N(6)-adenosine-methyltransferase MT-A70-like protein (608 aa).

The span at 250–265 (KKKQERRDEKELRPDV) shows a compositional bias: basic and acidic residues. The disordered stretch occupies residues 250–272 (KKKQERRDEKELRPDVDAGENVT). Residues 395–396 (DL) and Asp413 each bind S-adenosyl-L-methionine. Positions 414–428 (PPWDIHMELPYGTMS) are gate loop 1. The segment at 480 to 497 (QLQRIIRTGRTGHWLNHG) is interphase loop. The positively charged region required for RNA-binding stretch occupies residues 483 to 496 (RIIRTGRTGHWLNH). The segment at 525-533 (VRATSHKPD) is gate loop 2. S-adenosyl-L-methionine is bound by residues Lys531, 554 to 557 (RPHN), and 567 to 568 (NQ).

The protein belongs to the MT-A70-like family. In terms of assembly, component of the WMM complex, a N6-methyltransferase complex composed of a catalytic subcomplex, named MAC, and of an associated subcomplex, named MACOM. The MAC subcomplex is composed of Ime4/Mettl3 and Mettl14. The MACOM subcomplex is composed of fl(2)d, Flacc/Xio, Hakai, vir, and, in some cases of nito. In terms of tissue distribution, expressed in testes. In the ovaries, detected in germaria, prefollicle, follicle and polar cells (at protein levels). Detected in the ooplasm and in the cells of the 16-cell cyst of early stages (at protein levels).

The protein localises to the nucleus. The catalysed reaction is an adenosine in mRNA + S-adenosyl-L-methionine = an N(6)-methyladenosine in mRNA + S-adenosyl-L-homocysteine + H(+). Functionally, catalytic component of the WMM complex, a complex that mediates N6-methyladenosine (m6A) methylation of mRNAs, a modification that plays a role in the efficiency of mRNA splicing and is required for sex determination. In the heterodimer formed with Mettl14, constitutes the catalytic core. Required for sex determination and dosage compensation via Sxl alternative splicing: m6A methylation acts as a key regulator of Sxl pre-mRNA and promotes female-specific alternative splicing of Sxl, which determines female physiognomy. M6A methylation is also required for neuronal functions. During oogenesis, required for egg chamber development probably as part of the N/Notch signaling. In Drosophila melanogaster (Fruit fly), this protein is N(6)-adenosine-methyltransferase MT-A70-like protein.